The following is a 377-amino-acid chain: UDP-N-acetylglucosamine--N-acetylmuramyl-(pentapeptide) pyrophosphoryl-undecaprenol N-acetylglucosamine transferase (377 aa).

Residues 29–31 (TAG), asparagine 142, arginine 179, serine 213, and glutamine 308 each bind UDP-N-acetyl-alpha-D-glucosamine.

This sequence belongs to the glycosyltransferase 28 family. MurG subfamily.

The protein resides in the cell membrane. It carries out the reaction di-trans,octa-cis-undecaprenyl diphospho-N-acetyl-alpha-D-muramoyl-L-alanyl-D-glutamyl-meso-2,6-diaminopimeloyl-D-alanyl-D-alanine + UDP-N-acetyl-alpha-D-glucosamine = di-trans,octa-cis-undecaprenyl diphospho-[N-acetyl-alpha-D-glucosaminyl-(1-&gt;4)]-N-acetyl-alpha-D-muramoyl-L-alanyl-D-glutamyl-meso-2,6-diaminopimeloyl-D-alanyl-D-alanine + UDP + H(+). It functions in the pathway cell wall biogenesis; peptidoglycan biosynthesis. Functionally, cell wall formation. Catalyzes the transfer of a GlcNAc subunit on undecaprenyl-pyrophosphoryl-MurNAc-pentapeptide (lipid intermediate I) to form undecaprenyl-pyrophosphoryl-MurNAc-(pentapeptide)GlcNAc (lipid intermediate II). The polypeptide is UDP-N-acetylglucosamine--N-acetylmuramyl-(pentapeptide) pyrophosphoryl-undecaprenol N-acetylglucosamine transferase (Saccharopolyspora erythraea (strain ATCC 11635 / DSM 40517 / JCM 4748 / NBRC 13426 / NCIMB 8594 / NRRL 2338)).